We begin with the raw amino-acid sequence, 172 residues long: Large ribosomal subunit protein uL10 (172 aa).

Belongs to the universal ribosomal protein uL10 family. In terms of assembly, part of the ribosomal stalk of the 50S ribosomal subunit. The N-terminus interacts with L11 and the large rRNA to form the base of the stalk. The C-terminus forms an elongated spine to which L12 dimers bind in a sequential fashion forming a multimeric L10(L12)X complex.

Functionally, forms part of the ribosomal stalk, playing a central role in the interaction of the ribosome with GTP-bound translation factors. The sequence is that of Large ribosomal subunit protein uL10 from Rhizobium leguminosarum bv. trifolii (strain WSM2304).